Here is a 284-residue protein sequence, read N- to C-terminus: MDAIKKKMQAMKLEKDNAMDRALLCEQQARDANLRAEKAEEEARSLQKKIQQIENDLDQTMEQLMQVNAKLDEKDKALQNAESEVAALNRRIQLLEEDLERSEERLATATAKLAEASQAADESERARKILESKGLADEERMDALENQLKEARFMAEEADKKYDEVARKLAMVEADLERAEERAESGESKIVELEEELRVVGNNLKSLEVSEEKANLREEEYKQQIKTLTTRLKEAEARAEFAERSVQKLQKEVDRLEDELVHEKEKYKFICDDLDMTFTELIGI.

Positions 1–266 (MDAIKKKMQA…EDELVHEKEK (266 aa)) form a coiled coil.

Belongs to the tropomyosin family. In terms of assembly, homodimer. As to expression, expressed in striated skeletal muscle (at protein level).

Its function is as follows. Tropomyosin, in association with the troponin complex, plays a central role in the calcium dependent regulation of muscle contraction. In Periplaneta americana (American cockroach), this protein is Tropomyosin Per a 7.0102.